Consider the following 521-residue polypeptide: 4-cresol dehydrogenase [hydroxylating] flavoprotein subunit (521 aa).

Positions 54–268 (AAHAPSAAVT…VEIVDALRPL (215 aa)) constitute an FAD-binding PCMH-type domain. The residue at position 384 (Tyr384) is an O-8alpha-FAD tyrosine.

Tetramer of two cytochrome subunits and two flavoprotein subunits. FAD serves as cofactor.

It carries out the reaction 4-methylphenol + 4 oxidized [azurin] + H2O = 4 reduced [azurin] + 4-hydroxybenzaldehyde + 4 H(+). The protein operates within aromatic compound metabolism; p-cresol degradation. Functionally, catalyzes the azurin dependent hydroxylation of the methyl group of 4-methylphenol to form 4-hydroxybenzaldehyde. The protein is 4-cresol dehydrogenase [hydroxylating] flavoprotein subunit (pchF) of Pseudomonas putida (Arthrobacter siderocapsulatus).